Here is a 607-residue protein sequence, read N- to C-terminus: Rap1 GTPase-GDP dissociation stimulator 1 (607 aa).

ARM repeat units lie at residues 89 to 131 and 170 to 211; these read GLIS…DQAG and DSLQ…NLAE. The interval 122–170 is prevents binding to prenylated RHOA; it reads EGRSAVDQAGGAQIVIDHLRSLCGRTDPASEKLMTVFCGMLMNYSNEND. Lys-230 carries the post-translational modification N6-acetyllysine. 3 ARM repeats span residues 347–390, 391–431, and 479–519; these read DGNC…NLAI, PVVN…MLID, and SKDV…LIAA.

As to quaternary structure, interacts with RABL3. Interacts with RHOT1. Interacts with unprenylated RHOA; the interaction is direct. Interacts with RAP1A. Interacts with KRAS. Interacts with RAC1. Interacts with RAP1B. Preferentially interacts with unprenylated GTPases that will become geranylgeranylated. May also interact with prenylated GTPases. In terms of assembly, interacts with prenylated RHOA; the interaction is direct and in a 1:1 stoichiometry. Interacts with RAP1A. Interacts with KRAS. Interacts with RAC1. Interacts with RAP1B. Preferentially interacts with prenylated GTPases. In terms of processing, serotonylated on Gln residues by TGM2 in response to hypoxia, leading to its inactivation.

It is found in the cytoplasm. It localises to the cytosol. The protein resides in the endoplasmic reticulum. The protein localises to the mitochondrion. Its subcellular location is the nucleus. Functionally, acts as a GEF (guanine nucleotide exchange factor) for the Rho family of small GTP-binding proteins (G proteins) that stimulates the dissociation of GDP to enable subsequent binding of GTP. Additionally, appears to chaperone the processing and/or trafficking of small GTPases containing a C-terminal polybasic region independently of GEF activity. Targets include RAP1A/RAP1B, RHOA, RHOB, RHOC, RAC1 and KRAS. Regulates mitochondrial dynamics by controlling RHOT function to promote mitochondrial fission during high calcium conditions. Able to promote the Ca(2+) release from the endoplasmic reticulum via both inositol trisphosphate (Ins3P) and ryanodine sensitive receptors leading to a enhanced mitochondrial Ca(2+) uptake. In terms of biological role, acts as a GEF (guanine nucleotide exchange factor) for unprenylated RHOA. Chaperones the entry and passage of small GTPases through the prenylation pathway. Recognizes the last amino acid in the GTPase C-terminal CAAX motif with a preference for 'Leu' over 'Met', indicating involvement in the geranylgeranylation pathway. May also recognize prenylated GTPases. Acts as a GEF (guanine nucleotide exchange factor) for prenylated RHOA. Acts as a GEF for RHOC. Chaperones the downstream trafficking and/or processing of small newly prenylated GTPases. Escorts RAC1 to the nucleus. The polypeptide is Rap1 GTPase-GDP dissociation stimulator 1 (Mus musculus (Mouse)).